Reading from the N-terminus, the 245-residue chain is Flavin-dependent thymidylate synthase (245 aa).

A ThyX domain is found at 5–210 (IRVKLVNYTK…ELRPIIKWAK (206 aa)). FAD-binding positions include Ser-59, 83–85 (RHR), and Gln-91. Residues 80 to 83 (QLVR), 91 to 95 (QQSQR), and Arg-149 contribute to the dUMP site. The ThyX motif signature appears at 83 to 93 (RHRLASYTQQS). FAD is bound by residues 165-167 (NLR) and His-171. Arg-176 provides a ligand contact to dUMP. The Involved in ionization of N3 of dUMP, leading to its activation role is filled by Arg-176.

The protein belongs to the thymidylate synthase ThyX family. Homotetramer. Requires FAD as cofactor.

It carries out the reaction dUMP + (6R)-5,10-methylene-5,6,7,8-tetrahydrofolate + NADPH + H(+) = dTMP + (6S)-5,6,7,8-tetrahydrofolate + NADP(+). It functions in the pathway pyrimidine metabolism; dTTP biosynthesis. In terms of biological role, catalyzes the reductive methylation of 2'-deoxyuridine-5'-monophosphate (dUMP) to 2'-deoxythymidine-5'-monophosphate (dTMP) while utilizing 5,10-methylenetetrahydrofolate (mTHF) as the methyl donor, and NADPH and FADH(2) as the reductant. In Thermococcus kodakarensis (strain ATCC BAA-918 / JCM 12380 / KOD1) (Pyrococcus kodakaraensis (strain KOD1)), this protein is Flavin-dependent thymidylate synthase.